Reading from the N-terminus, the 71-residue chain is Exodeoxyribonuclease 7 small subunit (71 aa).

This sequence belongs to the XseB family. In terms of assembly, heterooligomer composed of large and small subunits.

The protein localises to the cytoplasm. It catalyses the reaction Exonucleolytic cleavage in either 5'- to 3'- or 3'- to 5'-direction to yield nucleoside 5'-phosphates.. Its function is as follows. Bidirectionally degrades single-stranded DNA into large acid-insoluble oligonucleotides, which are then degraded further into small acid-soluble oligonucleotides. The sequence is that of Exodeoxyribonuclease 7 small subunit from Clostridium botulinum (strain ATCC 19397 / Type A).